The sequence spans 180 residues: Pituitary tumor-transforming gene 1 protein-interacting protein (180 aa).

The N-terminal stretch at 1-32 (MAPGVARGPTPYWRLRLGGAALLLLLIPVAAA) is a signal peptide. At 33 to 96 (QEPPGAACSQ…RWGVCWVNFE (64 aa)) the chain is on the extracellular side. A PSI domain is found at 39-92 (ACSQNTNKTCEECLKNVSCLWCNTNKACLDYPVTSVLPPASLCKLSSARWGVCW). 2 N-linked (GlcNAc...) asparagine glycosylation sites follow: Asn45 and Asn54. A helical transmembrane segment spans residues 97-117 (ALIITMSVVGGTLLLGIAICC). The Cytoplasmic segment spans residues 118–180 (CCCCRRKRSR…ENPYARFENN (63 aa)). Residues 130–165 (DRSEEKAMREREERRIRQEERRAEMKTRHDEIRKKY) are a coiled coil. Positions 131 to 157 (RSEEKAMREREERRIRQEERRAEMKTR) are disordered. Tyr174 is subject to Phosphotyrosine.

In terms of assembly, interacts with PTTG1. Ubiquitous.

Its subcellular location is the membrane. It localises to the cytoplasm. The protein resides in the nucleus. In terms of biological role, may facilitate PTTG1 nuclear translocation. The chain is Pituitary tumor-transforming gene 1 protein-interacting protein (PTTG1IP) from Homo sapiens (Human).